The following is a 313-amino-acid chain: Ethylene-responsive transcription factor ERN2 (313 aa).

Positions 1-10 (MEIQFDEPKK) are enriched in basic and acidic residues. Residues 1–29 (MEIQFDEPKKSLRPKKVNKFKGRNKKSET) are disordered. A compositionally biased stretch (basic residues) spans 11-24 (SLRPKKVNKFKGRN). The segment at residues 32-89 (KFVGVRQRPSGRYVAEIKDTTQNIRMWLGTFETAEEAARAYDEAATLLRGSKTRTNFV) is a DNA-binding region (AP2/ERF). 2 disordered regions span residues 108 to 143 (NRKK…TSST) and 157 to 204 (TSAS…SSST). 2 stretches are compositionally biased toward low complexity: residues 122 to 143 (SSTT…TSST) and 157 to 193 (TSAS…TNVN).

Belongs to the AP2/ERF transcription factor family. ERF subfamily. In terms of tissue distribution, expressed in roots, root hairs and leaves. Expressed in root epidermis and root hairs.

It is found in the nucleus. Functionally, transcription factor involved in symbiotic nodule signaling in response to rhizobial Nod factors (NFs). Binds to the GCC box (NF-responsive box) of ENOD11 promoter. Acts as a transcriptional activator of NF-responsive box-containing target gene promoters in root hairs. Involved in early stages of root nodule development. Functions redundantly with ERN1. Is essential with ERN1 for the initiation of root hair infection, and nodule organogenesis and development. Required for accurate expression of the NF signaling genes ENOD11 and ENOD12. This Medicago truncatula (Barrel medic) protein is Ethylene-responsive transcription factor ERN2.